Here is a 669-residue protein sequence, read N- to C-terminus: DNA mismatch repair protein MutL (669 aa).

Residues 356 to 371 are compositionally biased toward basic and acidic residues; it reads FEQRQNTENKQEKTFS. Residues 356–379 form a disordered region; that stretch reads FEQRQNTENKQEKTFSSEESNSKP.

It belongs to the DNA mismatch repair MutL/HexB family.

This protein is involved in the repair of mismatches in DNA. It is required for dam-dependent methyl-directed DNA mismatch repair. May act as a 'molecular matchmaker', a protein that promotes the formation of a stable complex between two or more DNA-binding proteins in an ATP-dependent manner without itself being part of a final effector complex. The protein is DNA mismatch repair protein MutL of Staphylococcus aureus (strain MRSA252).